We begin with the raw amino-acid sequence, 590 residues long: Mitochondrial distribution and morphology protein 34 (590 aa).

The SMP-LTD domain maps to 1-225 (MSFIFNRETF…LPSVIFNMSQ (225 aa)). Positions 393-405 (RRKIKMRSRKPSK) are enriched in basic residues. The disordered stretch occupies residues 393–456 (RRKIKMRSRK…APEGGPNAED (64 aa)). Over residues 413–427 (PAQNDSGTSSCSNVA) the composition is skewed to polar residues.

It belongs to the MDM34 family. In terms of assembly, component of the ER-mitochondria encounter structure (ERMES) or MDM complex, composed of MMM1, MDM10, MDM12 and MDM34.

It is found in the mitochondrion outer membrane. Its function is as follows. Component of the ERMES/MDM complex, which serves as a molecular tether to connect the endoplasmic reticulum (ER) and mitochondria. Components of this complex are involved in the control of mitochondrial shape and protein biogenesis, and function in nonvesicular lipid trafficking between the ER and mitochondria. MDM34 is required for the interaction of the ER-resident membrane protein MMM1 and the outer mitochondrial membrane-resident beta-barrel protein MDM10. This chain is Mitochondrial distribution and morphology protein 34, found in Eremothecium gossypii (strain ATCC 10895 / CBS 109.51 / FGSC 9923 / NRRL Y-1056) (Yeast).